We begin with the raw amino-acid sequence, 598 residues long: MFS transporter L2 (598 aa).

Transmembrane regions (helical) follow at residues 83–103 (IAAF…ATSI), 122–142 (FWAG…LGSF), and 150–170 (SLIY…AVAN). N-linked (GlcNAc...) asparagine glycosylation occurs at N171. The next 5 helical transmembrane spans lie at 183–203 (GVGG…TVPL), 212–232 (FFGM…GAFA), 239–259 (WVFW…TVFL), 277–297 (WIGM…ITWG), and 309–329 (LVPL…QEKF). Residue N342 is glycosylated (N-linked (GlcNAc...) asparagine). Transmembrane regions (helical) follow at residues 346 to 366 (ALLY…LYFM), 383 to 403 (VALF…GIAI), 411 to 431 (WANW…ILLK), 439 to 459 (WIFL…AMAL), 476 to 496 (MFSF…GVVF), and 550 to 570 (YIWI…LFID).

It belongs to the major facilitator superfamily.

The protein localises to the membrane. Functionally, MFS transporter; part of the gene cluster that mediates the biosynthesis of squalestatin S1 (SQS1, also known as zaragozic acid A), a lead compound for the treatment of hyper-cholesterolemia by targeting squalene synthase (SS). The polypeptide is MFS transporter L2 (Phoma sp. (strain ATCC 20986 / MF5453)).